We begin with the raw amino-acid sequence, 254 residues long: Cell division protein ZapD (254 aa).

Belongs to the ZapD family. As to quaternary structure, interacts with FtsZ.

The protein resides in the cytoplasm. Cell division factor that enhances FtsZ-ring assembly. Directly interacts with FtsZ and promotes bundling of FtsZ protofilaments, with a reduction in FtsZ GTPase activity. In Idiomarina loihiensis (strain ATCC BAA-735 / DSM 15497 / L2-TR), this protein is Cell division protein ZapD.